Consider the following 260-residue polypeptide: Snake venom serine protease homolog 1 (260 aa).

Positions 1–18 (MVLIRVLANLLILQLSYA) are cleaved as a signal peptide. The propeptide occupies 19–24 (QKSSEL). Residues 25 to 251 (IIGGDECNIN…HLDWIKSIIA (227 aa)) form the Peptidase S1 domain. 6 cysteine pairs are disulfide-bonded: C31–C165, C52–C68, C100–C258, C144–C212, C176–C191, and C202–C227. N-linked (GlcNAc...) asparagine glycans are attached at residues N83, N123, and N124.

The protein belongs to the peptidase S1 family. Snake venom subfamily. Expressed by the venom gland.

Its subcellular location is the secreted. Functionally, snake venom serine protease homolog that may act in the hemostasis system of the prey. This is Snake venom serine protease homolog 1 from Trimeresurus stejnegeri (Chinese green tree viper).